The sequence spans 218 residues: Redox-sensing transcriptional repressor Rex (218 aa).

The segment at residues 25–64 is a DNA-binding region (H-T-H motif); the sequence is WYLSYVQLLHADGCESVSSTRIARAVGVDASLVAKDLSYV. Position 99–104 (99–104) interacts with NAD(+); it reads GVGSLG.

The protein belongs to the transcriptional regulatory Rex family. Homodimer.

It localises to the cytoplasm. In terms of biological role, modulates transcription in response to changes in cellular NADH/NAD(+) redox state. The polypeptide is Redox-sensing transcriptional repressor Rex (Porphyromonas gingivalis (strain ATCC BAA-308 / W83)).